The sequence spans 424 residues: Caspase-2 (424 aa).

Positions 1–140 (MLGACGMQRY…IVEHSLDSGD (140 aa)) are excised as a propeptide. One can recognise a CARD domain in the interval 7 to 96 (MQRYHQEALK…QHLAEMILKT (90 aa)). Active-site residues include histidine 248 and cysteine 291. Residues 296 to 310 (TDRGVDQRDGKERSD) show a composition bias toward basic and acidic residues. The segment at 296 to 325 (TDRGVDQRDGKERSDSPGCEESDANKEENL) is disordered.

It belongs to the peptidase C14A family. In terms of assembly, heterotetramer that consists of two anti-parallel arranged heterodimers, each one formed by a p18 subunit and a p12 subunit.

It carries out the reaction Strict requirement for an Asp residue at P1, with 316-Asp being essential for proteolytic activity and has a preferred cleavage sequence of Val-Asp-Val-Ala-Asp-|-.. Its function is as follows. Involved in the activation cascade of caspases responsible for apoptosis execution. Might function by either activating some proteins required for cell death or inactivating proteins necessary for cell survival. The protein is Caspase-2 (CASP2) of Gallus gallus (Chicken).